Consider the following 146-residue polypeptide: Acireductone dioxygenase (146 aa).

4 residues coordinate Fe(2+): H71, H73, E77, and H116. Ni(2+) is bound by residues H71, H73, E77, and H116.

This sequence belongs to the acireductone dioxygenase (ARD) family. Fe(2+) serves as cofactor. Ni(2+) is required as a cofactor.

The protein localises to the cytoplasm. Its subcellular location is the nucleus. It carries out the reaction 1,2-dihydroxy-5-(methylsulfanyl)pent-1-en-3-one + O2 = 4-methylsulfanyl-2-oxobutanoate + formate + 2 H(+). The catalysed reaction is 1,2-dihydroxy-5-(methylsulfanyl)pent-1-en-3-one + O2 = 3-(methylsulfanyl)propanoate + CO + formate + 2 H(+). It functions in the pathway amino-acid biosynthesis; L-methionine biosynthesis via salvage pathway; L-methionine from S-methyl-5-thio-alpha-D-ribose 1-phosphate: step 5/6. In terms of biological role, catalyzes 2 different reactions between oxygen and the acireductone 1,2-dihydroxy-3-keto-5-methylthiopentene (DHK-MTPene) depending upon the metal bound in the active site. Fe-containing acireductone dioxygenase (Fe-ARD) produces formate and 2-keto-4-methylthiobutyrate (KMTB), the alpha-ketoacid precursor of methionine in the methionine recycle pathway. Ni-containing acireductone dioxygenase (Ni-ARD) produces methylthiopropionate, carbon monoxide and formate, and does not lie on the methionine recycle pathway. This Heterostelium pallidum (strain ATCC 26659 / Pp 5 / PN500) (Cellular slime mold) protein is Acireductone dioxygenase.